Consider the following 126-residue polypeptide: Aspartate 1-decarboxylase (126 aa).

The Schiff-base intermediate with substrate; via pyruvic acid role is filled by Ser25. Ser25 is subject to Pyruvic acid (Ser). Substrate is bound at residue Thr57. Tyr58 functions as the Proton donor in the catalytic mechanism. 72-74 (GAT) is a binding site for substrate.

It belongs to the PanD family. Heterooctamer of four alpha and four beta subunits. Pyruvate serves as cofactor. Is synthesized initially as an inactive proenzyme, which is activated by self-cleavage at a specific serine bond to produce a beta-subunit with a hydroxyl group at its C-terminus and an alpha-subunit with a pyruvoyl group at its N-terminus.

The protein resides in the cytoplasm. The enzyme catalyses L-aspartate + H(+) = beta-alanine + CO2. The protein operates within cofactor biosynthesis; (R)-pantothenate biosynthesis; beta-alanine from L-aspartate: step 1/1. In terms of biological role, catalyzes the pyruvoyl-dependent decarboxylation of aspartate to produce beta-alanine. This chain is Aspartate 1-decarboxylase, found in Campylobacter jejuni subsp. doylei (strain ATCC BAA-1458 / RM4099 / 269.97).